The primary structure comprises 260 residues: Acetylglutamate kinase (260 aa).

Substrate is bound by residues 46-47 (GG), Arg-68, and Asn-160.

The protein belongs to the acetylglutamate kinase family. ArgB subfamily.

The protein localises to the cytoplasm. The catalysed reaction is N-acetyl-L-glutamate + ATP = N-acetyl-L-glutamyl 5-phosphate + ADP. Its pathway is amino-acid biosynthesis; L-arginine biosynthesis; N(2)-acetyl-L-ornithine from L-glutamate: step 2/4. Its function is as follows. Catalyzes the ATP-dependent phosphorylation of N-acetyl-L-glutamate. This chain is Acetylglutamate kinase, found in Shewanella oneidensis (strain ATCC 700550 / JCM 31522 / CIP 106686 / LMG 19005 / NCIMB 14063 / MR-1).